Here is a 574-residue protein sequence, read N- to C-terminus: Phenylalanine--tRNA ligase beta subunit (574 aa).

In terms of domain architecture, B5 spans 278–353 (LTPKEFEVEL…IAYGYNEIEP (76 aa)). Asp-331, Asp-337, Glu-340, and Asp-341 together coordinate Mg(2+).

This sequence belongs to the phenylalanyl-tRNA synthetase beta subunit family. Type 2 subfamily. As to quaternary structure, tetramer of two alpha and two beta subunits. It depends on Mg(2+) as a cofactor.

It is found in the cytoplasm. It carries out the reaction tRNA(Phe) + L-phenylalanine + ATP = L-phenylalanyl-tRNA(Phe) + AMP + diphosphate + H(+). The polypeptide is Phenylalanine--tRNA ligase beta subunit (Thermococcus kodakarensis (strain ATCC BAA-918 / JCM 12380 / KOD1) (Pyrococcus kodakaraensis (strain KOD1))).